The following is a 479-amino-acid chain: (R)-1-hydroxy-2-aminoethylphosphonate ammonia-lyase (479 aa).

N6-(pyridoxal phosphate)lysine is present on K317.

This sequence belongs to the class-III pyridoxal-phosphate-dependent aminotransferase family. Requires pyridoxal 5'-phosphate as cofactor.

The catalysed reaction is (1R)-(2-amino-1-hydroxyethyl)phosphonate = phosphonoacetaldehyde + NH4(+). Functionally, involved in phosphonate degradation. Functions as a lyase that catalyzes an elimination reaction on the naturally occurring compound (R)-1-hydroxy-2-aminoethylphosphonate ((R)-HAEP), releasing ammonia and generating phosphonoacetaldehyde (PAA), which can be then hydrolyzed by PhnX, encoded by an adjacent gene. Thus, catalyzes a reaction that serves to funnel (R)-HAEP into the hydrolytic pathway for aminoethylphosphonate (AEP, the most common biogenic phosphonate) degradation, expanding the scope and the usefulness of the pathway itself. Is not active toward the (S) enantiomer of HAEP or other HAEP-related compounds such as ethanolamine and D,L-isoserine, indicating a very high substrate specificity. This is (R)-1-hydroxy-2-aminoethylphosphonate ammonia-lyase from Vibrio splendidus (strain 12B01).